The primary structure comprises 183 residues: Translation initiation factor IF-3 (183 aa).

The protein belongs to the IF-3 family. Monomer.

The protein localises to the cytoplasm. Its function is as follows. IF-3 binds to the 30S ribosomal subunit and shifts the equilibrium between 70S ribosomes and their 50S and 30S subunits in favor of the free subunits, thus enhancing the availability of 30S subunits on which protein synthesis initiation begins. The sequence is that of Translation initiation factor IF-3 from Yersinia enterocolitica serotype O:8 / biotype 1B (strain NCTC 13174 / 8081).